The primary structure comprises 66 residues: Large ribosomal subunit protein uL29 (66 aa).

This sequence belongs to the universal ribosomal protein uL29 family.

This is Large ribosomal subunit protein uL29 from Rhizobium etli (strain CIAT 652).